The chain runs to 695 residues: DNA ligase (695 aa).

30–34 (DADFD) is a binding site for NAD(+). The interval 52–71 (TGASPTEEVAPAPPTSSPFR) is disordered. NAD(+) is bound by residues 81 to 82 (SL) and Glu-106. The active-site N6-AMP-lysine intermediate is the Lys-108. NAD(+) contacts are provided by Arg-129, Glu-169, Lys-285, and Lys-309. Residues Cys-403, Cys-406, Cys-422, and Cys-428 each coordinate Zn(2+). Residues 599 to 688 (VDSALLEGLT…APSSGDDAST (90 aa)) enclose the BRCT domain. A disordered region spans residues 676-695 (ENGAPSSGDDASTSADSVDD). The span at 679–695 (APSSGDDASTSADSVDD) shows a compositional bias: low complexity.

The protein belongs to the NAD-dependent DNA ligase family. LigA subfamily. Mg(2+) is required as a cofactor. Mn(2+) serves as cofactor.

It carries out the reaction NAD(+) + (deoxyribonucleotide)n-3'-hydroxyl + 5'-phospho-(deoxyribonucleotide)m = (deoxyribonucleotide)n+m + AMP + beta-nicotinamide D-nucleotide.. In terms of biological role, DNA ligase that catalyzes the formation of phosphodiester linkages between 5'-phosphoryl and 3'-hydroxyl groups in double-stranded DNA using NAD as a coenzyme and as the energy source for the reaction. It is essential for DNA replication and repair of damaged DNA. This is DNA ligase from Corynebacterium jeikeium (strain K411).